Here is a 97-residue protein sequence, read N- to C-terminus: uncharacterized protein (97 aa).

The next 3 helical transmembrane spans lie at 5-25 (INYL…FVGI), 49-71 (IAGY…SFQG), and 75-92 (LIPP…IYVN).

The protein resides in the cell membrane. This is an uncharacterized protein from Bacillus subtilis (strain 168).